We begin with the raw amino-acid sequence, 404 residues long: Cysteine desulfurase IscS (404 aa).

Residues 75 to 76, asparagine 155, glutamine 183, and 203 to 205 contribute to the pyridoxal 5'-phosphate site; these read AT and SGH. At lysine 206 the chain carries N6-(pyridoxal phosphate)lysine. Residue threonine 243 coordinates pyridoxal 5'-phosphate. The Cysteine persulfide intermediate role is filled by cysteine 328. Cysteine 328 lines the [2Fe-2S] cluster pocket.

This sequence belongs to the class-V pyridoxal-phosphate-dependent aminotransferase family. NifS/IscS subfamily. In terms of assembly, homodimer. Forms a heterotetramer with IscU, interacts with other sulfur acceptors. Requires pyridoxal 5'-phosphate as cofactor.

It is found in the cytoplasm. It catalyses the reaction (sulfur carrier)-H + L-cysteine = (sulfur carrier)-SH + L-alanine. The protein operates within cofactor biosynthesis; iron-sulfur cluster biosynthesis. Its function is as follows. Master enzyme that delivers sulfur to a number of partners involved in Fe-S cluster assembly, tRNA modification or cofactor biosynthesis. Catalyzes the removal of elemental sulfur atoms from cysteine to produce alanine. Functions as a sulfur delivery protein for Fe-S cluster synthesis onto IscU, an Fe-S scaffold assembly protein, as well as other S acceptor proteins. The sequence is that of Cysteine desulfurase IscS from Shewanella baltica (strain OS185).